The primary structure comprises 293 residues: MEITFQKVEHRYQHKTPFERRALYDVDVSFPSGGYYAIIGHTGSGKSTMIQHLNGLLQPTNGTVQIGEHFISAGKKEKKLKPLRKKVGVVFQFPEHQLFEETVEKDICFGPTNFGVSVEEAKQKAREAIELVGLEPELLARSPFELSGGQMRRVAIAGVLAMEPEVLVLDEPTAGLDPKGQNELMEMFYKLHKEKGLTVILVTHNMEDAAKYAEQIVVMHKGTVFLQGSAEEVFSHADELEKIGVDLPMSLKYKRAIEEKFGISIPKATLSLEDLTHEVVQVLRKGGHESCSS.

The region spanning 3–246 is the ABC transporter domain; the sequence is ITFQKVEHRY…ADELEKIGVD (244 aa). ATP is bound at residue 40-47; it reads GHTGSGKS.

Belongs to the ABC transporter superfamily. Energy-coupling factor EcfA family. Forms a stable energy-coupling factor (ECF) transporter complex composed of 2 membrane-embedded substrate-binding proteins (S component), 2 ATP-binding proteins (A component) and 2 transmembrane proteins (T component).

The protein resides in the cell membrane. Functionally, ATP-binding (A) component of a common energy-coupling factor (ECF) ABC-transporter complex. Unlike classic ABC transporters this ECF transporter provides the energy necessary to transport a number of different substrates. The polypeptide is Energy-coupling factor transporter ATP-binding protein EcfA2 (Bacillus cereus (strain ATCC 10987 / NRS 248)).